We begin with the raw amino-acid sequence, 161 residues long: Nucleotide-binding protein SO_3815 (161 aa).

The protein belongs to the YajQ family.

Its function is as follows. Nucleotide-binding protein. In Shewanella oneidensis (strain ATCC 700550 / JCM 31522 / CIP 106686 / LMG 19005 / NCIMB 14063 / MR-1), this protein is Nucleotide-binding protein SO_3815.